The sequence spans 270 residues: Replication protein A 32 kDa subunit (270 aa).

Met1 carries the N-acetylmethionine modification. Ser4 and Ser8 each carry phosphoserine; by PRKDC. Phosphothreonine; by PRKDC is present on Thr21. Residues 21-40 form a disordered region; it reads TQSPGGFGSPAPSQAEKKSR. Position 23 is a phosphoserine; by CDK2 (Ser23). At Ser29 the chain carries Phosphoserine; by CDK1. Residue Ser33 is modified to Phosphoserine; by PRKDC. Residues Lys37 and Lys38 each participate in a glycyl lysine isopeptide (Lys-Gly) (interchain with G-Cter in ubiquitin) cross-link. A DNA-binding region (OB) is located at residues 74–148; it reads VTIVGIIRHA…KSLVAFKIMP (75 aa). The interval 187–270 is interaction with RAD52, TIPIN, UNG and XPA; the sequence is GMSEAGNFGG…DDHFKSTDAE (84 aa).

Belongs to the replication factor A protein 2 family. In terms of assembly, component of the replication protein A complex (RPA/RP-A), a heterotrimeric complex composed of RPA1, RPA2 and RPA3. Interacts with PRPF19; the PRP19-CDC5L complex is recruited to the sites of DNA repair where it ubiquitinates the replication protein A complex (RPA). Interacts with SERTAD3. Interacts with TIPIN. Interacts with TIMELESS. Interacts with PPP4R2; the interaction is direct, DNA damage-dependent and mediates the recruitment of the PP4 catalytic subunit PPP4C. Interacts (hyperphosphorylated) with RAD51. Interacts with SMARCAL1; the interaction is direct and mediates the recruitment to the RPA complex of SMARCAL1. Interacts with RAD52 and XPA; those interactions are direct and associate RAD52 and XPA to the RPA complex. Interacts with FBH1. Interacts with ETAA1; the interaction is direct and promotes ETAA1 recruitment at stalled replication forks. Interacts with DDI2. Interacts (in unphosphorylated form via N-terminus) with EIF4EBP3; the interaction enhances EIF4EBP3-mediated inhibition of EIF4E-mediated mRNA nuclear export. In terms of processing, differentially phosphorylated throughout the cell cycle, becoming phosphorylated at the G1-S transition and dephosphorylated in late mitosis. Mainly phosphorylated at Ser-23 and Ser-29, by cyclin A-CDK2 and cyclin B-CDK1, respectively during DNA replication and mitosis. Dephosphorylation may require the serine/threonine-protein phosphatase 4. Phosphorylation at Ser-23 and Ser-29 is a prerequisite for further phosphorylation. Becomes hyperphosphorylated on additional residues including Ser-4, Ser-8, Thr-21 and Ser-33 in response to DNA damage. Hyperphosphorylation is mediated by ATM, ATR and PRKDC. Primarily recruited to DNA repair nuclear foci as a hypophosphorylated form it undergoes subsequent hyperphosphorylation, catalyzed by ATR. Hyperphosphorylation is required for RAD51 recruitment to chromatin and efficient DNA repair. Phosphorylation at Thr-21 depends upon RFWD3 presence. DNA damage-induced 'Lys-63'-linked polyubiquitination by PRPF19 mediates ATRIP recruitment to the RPA complex at sites of DNA damage and activation of ATR. Ubiquitinated by RFWD3 at stalled replication forks in response to DNA damage: ubiquitination by RFWD3 does not lead to degradation by the proteasome and promotes removal of the RPA complex from stalled replication forks, promoting homologous recombination.

The protein resides in the nucleus. It is found in the PML body. Functionally, as part of the heterotrimeric replication protein A complex (RPA/RP-A), binds and stabilizes single-stranded DNA intermediates, that form during DNA replication or upon DNA stress. It prevents their reannealing and in parallel, recruits and activates different proteins and complexes involved in DNA metabolism. Thereby, it plays an essential role both in DNA replication and the cellular response to DNA damage. In the cellular response to DNA damage, the RPA complex controls DNA repair and DNA damage checkpoint activation. Through recruitment of ATRIP activates the ATR kinase a master regulator of the DNA damage response. It is required for the recruitment of the DNA double-strand break repair factors RAD51 and RAD52 to chromatin in response to DNA damage. Also recruits to sites of DNA damage proteins like XPA and XPG that are involved in nucleotide excision repair and is required for this mechanism of DNA repair. Also plays a role in base excision repair (BER) probably through interaction with UNG. Also recruits SMARCAL1/HARP, which is involved in replication fork restart, to sites of DNA damage. May also play a role in telomere maintenance. The protein is Replication protein A 32 kDa subunit (RPA2) of Pongo abelii (Sumatran orangutan).